The primary structure comprises 35 residues: ASKTPVGFIGLGNMGNPMAKNLMKHGYPLIIYDVF.

4-33 (TPVGFIGLGNMGNPMAKNLMKHGYPLIIYD) serves as a coordination point for NAD(+). Lys24 carries the N6-acetyllysine; alternate modification. At Lys24 the chain carries N6-succinyllysine; alternate.

The protein belongs to the HIBADH-related family. 3-hydroxyisobutyrate dehydrogenase subfamily. As to quaternary structure, homodimer.

It is found in the mitochondrion. It catalyses the reaction 3-hydroxy-2-methylpropanoate + NAD(+) = 2-methyl-3-oxopropanoate + NADH + H(+). It functions in the pathway amino-acid degradation; L-valine degradation. The chain is 3-hydroxyisobutyrate dehydrogenase (HIBADH) from Oryctolagus cuniculus (Rabbit).